The chain runs to 204 residues: Proteasome subunit beta 1 (204 aa).

Residues 1–9 (MSYEYGTGA) constitute a propeptide, removed in mature form; by autocatalysis. The active-site Nucleophile is threonine 10.

The protein belongs to the peptidase T1B family. The 20S proteasome core is composed of 14 alpha and 14 beta subunits that assemble into four stacked heptameric rings, resulting in a barrel-shaped structure. The two inner rings, each composed of seven catalytic beta subunits, are sandwiched by two outer rings, each composed of seven alpha subunits. The catalytic chamber with the active sites is on the inside of the barrel. Has a gated structure, the ends of the cylinder being occluded by the N-termini of the alpha-subunits. Is capped at one or both ends by the proteasome regulatory ATPase, PAN.

It localises to the cytoplasm. It catalyses the reaction Cleavage of peptide bonds with very broad specificity.. Its activity is regulated as follows. The formation of the proteasomal ATPase PAN-20S proteasome complex, via the docking of the C-termini of PAN into the intersubunit pockets in the alpha-rings, triggers opening of the gate for substrate entry. Interconversion between the open-gate and close-gate conformations leads to a dynamic regulation of the 20S proteasome proteolysis activity. Its function is as follows. Component of the proteasome core, a large protease complex with broad specificity involved in protein degradation. This Hyperthermus butylicus (strain DSM 5456 / JCM 9403 / PLM1-5) protein is Proteasome subunit beta 1.